The primary structure comprises 240 residues: 2,3,4,5-tetrahydropyridine-2,6-dicarboxylate N-acetyltransferase (240 aa).

This sequence belongs to the transferase hexapeptide repeat family. DapH subfamily.

The catalysed reaction is (S)-2,3,4,5-tetrahydrodipicolinate + acetyl-CoA + H2O = L-2-acetamido-6-oxoheptanedioate + CoA. It functions in the pathway amino-acid biosynthesis; L-lysine biosynthesis via DAP pathway; LL-2,6-diaminopimelate from (S)-tetrahydrodipicolinate (acetylase route): step 1/3. In terms of biological role, catalyzes the transfer of an acetyl group from acetyl-CoA to tetrahydrodipicolinate. This Bacillus cereus (strain AH187) protein is 2,3,4,5-tetrahydropyridine-2,6-dicarboxylate N-acetyltransferase.